A 368-amino-acid chain; its full sequence is uncharacterized protein (368 aa).

The protein belongs to the YCR102c/YLR460c/YNL134c family.

This is an uncharacterized protein from Saccharomyces cerevisiae (strain ATCC 204508 / S288c) (Baker's yeast).